The chain runs to 225 residues: Ribosome maturation factor RimM (225 aa).

The PRC barrel domain maps to 144–225 (ADEFYWVDLI…RIVVDWEADY (82 aa)).

This sequence belongs to the RimM family. Binds ribosomal protein uS19.

It localises to the cytoplasm. An accessory protein needed during the final step in the assembly of 30S ribosomal subunit, possibly for assembly of the head region. Essential for efficient processing of 16S rRNA. May be needed both before and after RbfA during the maturation of 16S rRNA. It has affinity for free ribosomal 30S subunits but not for 70S ribosomes. This Burkholderia orbicola (strain AU 1054) protein is Ribosome maturation factor RimM.